Here is a 157-residue protein sequence, read N- to C-terminus: Protein Smg (157 aa).

This sequence belongs to the Smg family.

This chain is Protein Smg, found in Buchnera aphidicola subsp. Schizaphis graminum (strain Sg).